The following is a 753-amino-acid chain: Photosystem I P700 chlorophyll a apoprotein A1 (753 aa).

8 consecutive transmembrane segments (helical) span residues 73–96 (IFSAHFGHLSIIFVWISGMIFHAA), 159–182 (LYSAAIGALVAAVVMMYAGYYHYH), 198–222 (MTHHLIVLLGLGNLAWTGHLIHVSL), 294–312 (IAHHHLALAVMYIIAGHMY), 349–372 (WHAQLAINLATWGSFSIIVAHHMY), 388–414 (LNLFVHHMWIGGFLIVGGAAHAAIFMV), 436–458 (TIISHLNWVCIFLGFHSFGLYIH), and 534–552 (FMIHHIHAFQIHVTVLILI). Positions 576 and 585 each coordinate [4Fe-4S] cluster. Helical transmembrane passes span 592 to 613 (HIFLGLFWMYNCISIVNFHFFW) and 667 to 689 (LSAYGILFLGAHFIWAFSLMFLF). His678 contributes to the chlorophyll a' binding site. Chlorophyll a-binding residues include Met686 and Tyr694. Trp695 contributes to the phylloquinone binding site. Residues 727 to 747 (AVGLGHYLLGGIVTSWSFYLA) traverse the membrane as a helical segment.

The protein belongs to the PsaA/PsaB family. The PsaA/B heterodimer binds the P700 chlorophyll special pair and subsequent electron acceptors. PSI consists of a core antenna complex that captures photons, and an electron transfer chain that converts photonic excitation into a charge separation. The cyanobacterial PSI reaction center is composed of one copy each of PsaA,B,C,D,E,F,I,J,K,L,M and X, and forms trimeric complexes. PSI electron transfer chain: 5 chlorophyll a, 1 chlorophyll a', 2 phylloquinones and 3 4Fe-4S clusters. PSI core antenna: 90 chlorophyll a, 22 carotenoids, 3 phospholipids and 1 galactolipid. P700 is a chlorophyll a/chlorophyll a' dimer, A0 is one or more chlorophyll a, A1 is one or both phylloquinones and FX is a shared 4Fe-4S iron-sulfur center. serves as cofactor.

The protein resides in the cellular thylakoid membrane. The enzyme catalyses reduced [plastocyanin] + hnu + oxidized [2Fe-2S]-[ferredoxin] = oxidized [plastocyanin] + reduced [2Fe-2S]-[ferredoxin]. In terms of biological role, psaA and PsaB bind P700, the primary electron donor of photosystem I (PSI), as well as the electron acceptors A0, A1 and FX. PSI is a plastocyanin/cytochrome c6-ferredoxin oxidoreductase, converting photonic excitation into a charge separation, which transfers an electron from the donor P700 chlorophyll pair to the spectroscopically characterized acceptors A0, A1, FX, FA and FB in turn. Oxidized P700 is reduced on the lumenal side of the thylakoid membrane by plastocyanin or cytochrome c6. The protein is Photosystem I P700 chlorophyll a apoprotein A1 of Acaryochloris marina (strain MBIC 11017).